A 227-amino-acid chain; its full sequence is Apoptosis regulator OPG045 (227 aa).

Belongs to the orthopoxvirus OPG045 family. Homodimer. Interacts with host pro-apoptotic protein BCL2L11 (via BH3 domain). Interacts with host NLRP1. Interacts with host BAK.

It is found in the host mitochondrion outer membrane. It localises to the host cytoplasm. Functionally, plays a role in evading host innate immune response by inhibiting host inflammasome activation. Interacts with and inhibits NLR-mediated interleukin-1 beta/IL1B production in infected cells. At the host mitochondria outer membrane, interacts with the BH3 domain of host BAK and prevents BAK from binding active BAX. In turn, host apoptosis is inhibited. The polypeptide is Apoptosis regulator OPG045 (OPG045) (Oryctolagus cuniculus (Rabbit)).